The primary structure comprises 106 residues: Large ribosomal subunit protein eL42 (106 aa).

Residues Met-1 to Lys-29 show a composition bias toward basic residues. Positions Met-1–Pro-56 are disordered.

The protein belongs to the eukaryotic ribosomal protein eL42 family.

The chain is Large ribosomal subunit protein eL42 (RPL44) from Cryptococcus neoformans var. neoformans serotype D (strain B-3501A) (Filobasidiella neoformans).